Consider the following 321-residue polypeptide: MKTMESVRLISGSAHPQFAELLSKGMNIELSKCESKHFLNGETSVILGESVRSASVYIIQPTCSPNVNDNIMELLVLVDAVRRASSKHITAVIPFFGYGKQNKKEKSREPITGKLIANLIETSGVDRVISMDLEASQIQGFFNIPVDNLYAEPLIVKYIEKHYKHLGEKVVISPAVDGVKRAKLVSDKLNCDLAILDRQTKGDKEDMILVGDVSGKVAIIIGSIADTCETLALSAKILKSKGATNVFALVSHGELSGNAIETLNNSELEELVITNSIPQTEKSKQCPKLKIINVTPMFCEALKRIIHGESITAASSKFVIL.

Positions 132 and 147 each coordinate Mg(2+). Positions 214 to 229 are binding of phosphoribosylpyrophosphate; that stretch reads SGKVAIIIGSIADTCE.

This sequence belongs to the ribose-phosphate pyrophosphokinase family. It depends on Mg(2+) as a cofactor.

Its subcellular location is the cytoplasm. The enzyme catalyses D-ribose 5-phosphate + ATP = 5-phospho-alpha-D-ribose 1-diphosphate + AMP + H(+). It functions in the pathway metabolic intermediate biosynthesis; 5-phospho-alpha-D-ribose 1-diphosphate biosynthesis; 5-phospho-alpha-D-ribose 1-diphosphate from D-ribose 5-phosphate (route I): step 1/1. The polypeptide is Ribose-phosphate pyrophosphokinase C (prsC) (Dictyostelium discoideum (Social amoeba)).